The sequence spans 602 residues: Elongation factor 4 (602 aa).

The 183-residue stretch at 2 to 184 folds into the tr-type G domain; it reads DHIRNFSIIA…AVIARMPPPK (183 aa). Residues 14–19 and 131–134 contribute to the GTP site; these read DHGKST and NKMD.

Belongs to the TRAFAC class translation factor GTPase superfamily. Classic translation factor GTPase family. LepA subfamily.

It localises to the cell inner membrane. It carries out the reaction GTP + H2O = GDP + phosphate + H(+). Its function is as follows. Required for accurate and efficient protein synthesis under certain stress conditions. May act as a fidelity factor of the translation reaction, by catalyzing a one-codon backward translocation of tRNAs on improperly translocated ribosomes. Back-translocation proceeds from a post-translocation (POST) complex to a pre-translocation (PRE) complex, thus giving elongation factor G a second chance to translocate the tRNAs correctly. Binds to ribosomes in a GTP-dependent manner. This Leptothrix cholodnii (strain ATCC 51168 / LMG 8142 / SP-6) (Leptothrix discophora (strain SP-6)) protein is Elongation factor 4.